A 367-amino-acid chain; its full sequence is Phosphoribosylaminoimidazole-succinocarboxamide synthase (367 aa).

Belongs to the SAICAR synthetase family.

It carries out the reaction 5-amino-1-(5-phospho-D-ribosyl)imidazole-4-carboxylate + L-aspartate + ATP = (2S)-2-[5-amino-1-(5-phospho-beta-D-ribosyl)imidazole-4-carboxamido]succinate + ADP + phosphate + 2 H(+). The protein operates within purine metabolism; IMP biosynthesis via de novo pathway; 5-amino-1-(5-phospho-D-ribosyl)imidazole-4-carboxamide from 5-amino-1-(5-phospho-D-ribosyl)imidazole-4-carboxylate: step 1/2. This Shewanella frigidimarina (strain NCIMB 400) protein is Phosphoribosylaminoimidazole-succinocarboxamide synthase.